Consider the following 334-residue polypeptide: Transcription initiation factor IIB (334 aa).

The TFIIB-type zinc-finger motif lies at 34-65 (TETVCPECGGRQLVHDYERAELVCQSCGLVID). Zn(2+)-binding residues include Cys38, Cys41, Cys57, and Cys60. 2 repeat units span residues 151 to 234 (SELD…SREL) and 245 to 326 (DYVP…ELAE).

It belongs to the TFIIB family.

Stabilizes TBP binding to an archaeal box-A promoter. Also responsible for recruiting RNA polymerase II to the pre-initiation complex (DNA-TBP-TFIIB). In Methanoregula boonei (strain DSM 21154 / JCM 14090 / 6A8), this protein is Transcription initiation factor IIB.